Reading from the N-terminus, the 68-residue chain is Conotoxin reg3.14 (68 aa).

The first 22 residues, 1–22 (MMSKLGVLLTICLLLFPLSVLP), serve as a signal peptide directing secretion. Residues 23–52 (LDGDQPADQPAERMQDISAEQNPWFDPVKR) constitute a propeptide that is removed on maturation. 3 cysteine pairs are disulfide-bonded: cysteine 53–cysteine 68, cysteine 54–cysteine 64, and cysteine 59–cysteine 67.

It belongs to the conotoxin M superfamily. Expressed by the venom duct.

The protein resides in the secreted. The sequence is that of Conotoxin reg3.14 from Conus regius (Crown cone).